Here is a 387-residue protein sequence, read N- to C-terminus: Phosphoglycerate kinase (387 aa).

Residues 21–23 (DLN), R36, 59–62 (HLGR), R113, and R146 contribute to the substrate site. ATP contacts are provided by residues K197, E314, and 340-343 (GGDT).

The protein belongs to the phosphoglycerate kinase family. As to quaternary structure, monomer.

The protein localises to the cytoplasm. It catalyses the reaction (2R)-3-phosphoglycerate + ATP = (2R)-3-phospho-glyceroyl phosphate + ADP. It functions in the pathway carbohydrate degradation; glycolysis; pyruvate from D-glyceraldehyde 3-phosphate: step 2/5. This Marinomonas sp. (strain MWYL1) protein is Phosphoglycerate kinase.